The primary structure comprises 510 residues: 2,3-bisphosphoglycerate-independent phosphoglycerate mutase (510 aa).

Mn(2+) is bound by residues aspartate 12 and serine 62. Serine 62 (phosphoserine intermediate) is an active-site residue. Substrate contacts are provided by residues histidine 123, 153 to 154 (RD), arginine 185, arginine 191, 261 to 264 (RPDR), and lysine 336. 5 residues coordinate Mn(2+): aspartate 403, histidine 407, aspartate 444, histidine 445, and histidine 462.

This sequence belongs to the BPG-independent phosphoglycerate mutase family. As to quaternary structure, monomer. It depends on Mn(2+) as a cofactor.

It catalyses the reaction (2R)-2-phosphoglycerate = (2R)-3-phosphoglycerate. The protein operates within carbohydrate degradation; glycolysis; pyruvate from D-glyceraldehyde 3-phosphate: step 3/5. Essential for rapid growth and for sporulation. Catalyzes the interconversion of 2-phosphoglycerate and 3-phosphoglycerate. In Priestia megaterium (strain DSM 319 / IMG 1521) (Bacillus megaterium), this protein is 2,3-bisphosphoglycerate-independent phosphoglycerate mutase.